The chain runs to 344 residues: Molybdate/tungstate import ATP-binding protein WtpC (344 aa).

Positions 2 to 231 constitute an ABC transporter domain; the sequence is LRVESVSKDY…PVDEGVARFL (230 aa). An ATP-binding site is contributed by 33 to 40; that stretch reads GPSGAGKT. One can recognise a Mop domain in the interval 280-344; sequence KTSARNEFRA…SFKTSAIKVF (65 aa).

This sequence belongs to the ABC transporter superfamily. Sulfate/tungstate importer (TC 3.A.1.6) family. In terms of assembly, the complex is composed of two ATP-binding proteins (WtpC), two transmembrane proteins (WtpB) and a solute-binding protein (WtpA).

It is found in the cell membrane. It carries out the reaction tungstate(in) + ATP + H2O = tungstate(out) + ADP + phosphate + H(+). Its function is as follows. Part of the ABC transporter complex WtpABC involved in molybdate/tungstate import. Responsible for energy coupling to the transport system. The chain is Molybdate/tungstate import ATP-binding protein WtpC (wtpC) from Pyrococcus abyssi (strain GE5 / Orsay).